The primary structure comprises 574 residues: Arginine--tRNA ligase (574 aa).

A 'HIGH' region motif is present at residues 124-134; sequence ANPNGPLHIGH.

It belongs to the class-I aminoacyl-tRNA synthetase family.

The protein localises to the cytoplasm. The enzyme catalyses tRNA(Arg) + L-arginine + ATP = L-arginyl-tRNA(Arg) + AMP + diphosphate. In Methanococcus aeolicus (strain ATCC BAA-1280 / DSM 17508 / OCM 812 / Nankai-3), this protein is Arginine--tRNA ligase.